A 393-amino-acid chain; its full sequence is NAD(P)H-quinone oxidoreductase subunit H, chloroplastic (393 aa).

It belongs to the complex I 49 kDa subunit family. As to quaternary structure, NDH is composed of at least 16 different subunits, 5 of which are encoded in the nucleus.

The protein localises to the plastid. It is found in the chloroplast thylakoid membrane. The catalysed reaction is a plastoquinone + NADH + (n+1) H(+)(in) = a plastoquinol + NAD(+) + n H(+)(out). The enzyme catalyses a plastoquinone + NADPH + (n+1) H(+)(in) = a plastoquinol + NADP(+) + n H(+)(out). NDH shuttles electrons from NAD(P)H:plastoquinone, via FMN and iron-sulfur (Fe-S) centers, to quinones in the photosynthetic chain and possibly in a chloroplast respiratory chain. The immediate electron acceptor for the enzyme in this species is believed to be plastoquinone. Couples the redox reaction to proton translocation, and thus conserves the redox energy in a proton gradient. The sequence is that of NAD(P)H-quinone oxidoreductase subunit H, chloroplastic from Piper cenocladum (Ant piper).